Reading from the N-terminus, the 436-residue chain is Methanethiol oxidase (436 aa).

An N-terminal signal peptide occupies residues 1 to 24 (MKRREFGALAAGALAMGLPFRAFA).

It belongs to the selenium-binding protein family.

Its subcellular location is the periplasm. It catalyses the reaction methanethiol + O2 + H2O = hydrogen sulfide + formaldehyde + H2O2 + H(+). It functions in the pathway organosulfur degradation. Catalyzes the oxidation of methanethiol. The sequence is that of Methanethiol oxidase from Ruegeria pomeroyi (strain ATCC 700808 / DSM 15171 / DSS-3) (Silicibacter pomeroyi).